We begin with the raw amino-acid sequence, 276 residues long: Octanoyltransferase LipM (276 aa).

In terms of domain architecture, BPL/LPL catalytic spans 32–247 (GEVAPTLRFY…GFEDALQLTF (216 aa)). The active-site Acyl-thioester intermediate is the C149.

The protein belongs to the octanoyltransferase LipM family. As to quaternary structure, monomer.

It catalyses the reaction octanoyl-[ACP] + L-lysyl-[protein] = N(6)-octanoyl-L-lysyl-[protein] + holo-[ACP] + H(+). It participates in protein modification; protein lipoylation via endogenous pathway; protein N(6)-(lipoyl)lysine from octanoyl-[acyl-carrier-protein]. Its function is as follows. Catalyzes the transfer of endogenously produced octanoic acid from octanoyl-acyl-carrier-protein onto the lipoyl domain of GcvH, an intermediate carrier during protein lipoylation. In Exiguobacterium sibiricum (strain DSM 17290 / CCUG 55495 / CIP 109462 / JCM 13490 / 255-15), this protein is Octanoyltransferase LipM.